The sequence spans 313 residues: tRNA uridine(34) hydroxylase (313 aa).

Residues 124–218 (SDPEVLLIDT…YLEEVPQQES (95 aa)) form the Rhodanese domain. Cysteine 178 (cysteine persulfide intermediate) is an active-site residue.

Belongs to the TrhO family.

The enzyme catalyses uridine(34) in tRNA + AH2 + O2 = 5-hydroxyuridine(34) in tRNA + A + H2O. Its function is as follows. Catalyzes oxygen-dependent 5-hydroxyuridine (ho5U) modification at position 34 in tRNAs. In Pseudomonas fluorescens (strain ATCC BAA-477 / NRRL B-23932 / Pf-5), this protein is tRNA uridine(34) hydroxylase.